A 418-amino-acid polypeptide reads, in one-letter code: NADH-quinone oxidoreductase subunit D (418 aa).

It belongs to the complex I 49 kDa subunit family. NDH-1 is composed of 14 different subunits. Subunits NuoB, C, D, E, F, and G constitute the peripheral sector of the complex.

The protein resides in the cell inner membrane. The enzyme catalyses a quinone + NADH + 5 H(+)(in) = a quinol + NAD(+) + 4 H(+)(out). Functionally, NDH-1 shuttles electrons from NADH, via FMN and iron-sulfur (Fe-S) centers, to quinones in the respiratory chain. The immediate electron acceptor for the enzyme in this species is believed to be ubiquinone. Couples the redox reaction to proton translocation (for every two electrons transferred, four hydrogen ions are translocated across the cytoplasmic membrane), and thus conserves the redox energy in a proton gradient. This chain is NADH-quinone oxidoreductase subunit D, found in Neisseria gonorrhoeae (strain ATCC 700825 / FA 1090).